Consider the following 120-residue polypeptide: Large ribosomal subunit protein uL22 (120 aa).

This sequence belongs to the universal ribosomal protein uL22 family. Part of the 50S ribosomal subunit.

In terms of biological role, this protein binds specifically to 23S rRNA; its binding is stimulated by other ribosomal proteins, e.g. L4, L17, and L20. It is important during the early stages of 50S assembly. It makes multiple contacts with different domains of the 23S rRNA in the assembled 50S subunit and ribosome. Its function is as follows. The globular domain of the protein is located near the polypeptide exit tunnel on the outside of the subunit, while an extended beta-hairpin is found that lines the wall of the exit tunnel in the center of the 70S ribosome. The chain is Large ribosomal subunit protein uL22 from Crocosphaera subtropica (strain ATCC 51142 / BH68) (Cyanothece sp. (strain ATCC 51142)).